We begin with the raw amino-acid sequence, 349 residues long: Alanine racemase (349 aa).

Lysine 35 functions as the Proton acceptor; specific for D-alanine in the catalytic mechanism. N6-(pyridoxal phosphate)lysine is present on lysine 35. Arginine 130 provides a ligand contact to substrate. The Proton acceptor; specific for L-alanine role is filled by tyrosine 244. Position 292 (methionine 292) interacts with substrate.

Belongs to the alanine racemase family. Pyridoxal 5'-phosphate serves as cofactor.

The enzyme catalyses L-alanine = D-alanine. The protein operates within amino-acid biosynthesis; D-alanine biosynthesis; D-alanine from L-alanine: step 1/1. In terms of biological role, catalyzes the interconversion of L-alanine and D-alanine. May also act on other amino acids. This chain is Alanine racemase (alr), found in Cereibacter sphaeroides (strain ATCC 17025 / ATH 2.4.3) (Rhodobacter sphaeroides).